The primary structure comprises 71 residues: Small ribosomal subunit protein bS21 (71 aa).

It belongs to the bacterial ribosomal protein bS21 family.

This chain is Small ribosomal subunit protein bS21, found in Acidithiobacillus ferrooxidans (strain ATCC 23270 / DSM 14882 / CIP 104768 / NCIMB 8455) (Ferrobacillus ferrooxidans (strain ATCC 23270)).